The following is a 147-amino-acid chain: Ribosome-binding factor A (147 aa).

The segment at 123–147 (LAKLKEGAQPAGDANPYKTSDEEED) is disordered.

It belongs to the RbfA family. Monomer. Binds 30S ribosomal subunits, but not 50S ribosomal subunits or 70S ribosomes.

Its subcellular location is the cytoplasm. In terms of biological role, one of several proteins that assist in the late maturation steps of the functional core of the 30S ribosomal subunit. Associates with free 30S ribosomal subunits (but not with 30S subunits that are part of 70S ribosomes or polysomes). Required for efficient processing of 16S rRNA. May interact with the 5'-terminal helix region of 16S rRNA. The sequence is that of Ribosome-binding factor A from Corynebacterium aurimucosum (strain ATCC 700975 / DSM 44827 / CIP 107346 / CN-1) (Corynebacterium nigricans).